Reading from the N-terminus, the 695-residue chain is Elongation factor G 1 (695 aa).

Residues 6–282 (STFRNIGISA…AITYYLPDPT (277 aa)) form the tr-type G domain. Residues 15-22 (AHIDSGKT), 82-86 (DTPGH), and 136-139 (NKCD) each bind GTP.

It belongs to the TRAFAC class translation factor GTPase superfamily. Classic translation factor GTPase family. EF-G/EF-2 subfamily.

Its subcellular location is the cytoplasm. In terms of biological role, catalyzes the GTP-dependent ribosomal translocation step during translation elongation. During this step, the ribosome changes from the pre-translocational (PRE) to the post-translocational (POST) state as the newly formed A-site-bound peptidyl-tRNA and P-site-bound deacylated tRNA move to the P and E sites, respectively. Catalyzes the coordinated movement of the two tRNA molecules, the mRNA and conformational changes in the ribosome. The protein is Elongation factor G 1 (fusA) of Treponema pallidum (strain Nichols).